The sequence spans 93 residues: YcgL domain-containing protein KPN78578_22820 (93 aa).

Residues 1–85 (MFCVIYRSTK…PSENLLKKHL (85 aa)) enclose the YcgL domain.

In Klebsiella pneumoniae subsp. pneumoniae (strain ATCC 700721 / MGH 78578), this protein is YcgL domain-containing protein KPN78578_22820.